We begin with the raw amino-acid sequence, 145 residues long: UPF0735 ACT domain-containing protein CPE1414 (145 aa).

Residues 69–144 enclose the ACT domain; the sequence is IFNMVVTHEK…GVEKVEFVAM (76 aa).

Belongs to the UPF0735 family.

The protein is UPF0735 ACT domain-containing protein CPE1414 of Clostridium perfringens (strain 13 / Type A).